We begin with the raw amino-acid sequence, 341 residues long: S-adenosylmethionine:tRNA ribosyltransferase-isomerase (341 aa).

Belongs to the QueA family. Monomer.

It localises to the cytoplasm. It carries out the reaction 7-aminomethyl-7-carbaguanosine(34) in tRNA + S-adenosyl-L-methionine = epoxyqueuosine(34) in tRNA + adenine + L-methionine + 2 H(+). Its pathway is tRNA modification; tRNA-queuosine biosynthesis. Its function is as follows. Transfers and isomerizes the ribose moiety from AdoMet to the 7-aminomethyl group of 7-deazaguanine (preQ1-tRNA) to give epoxyqueuosine (oQ-tRNA). This is S-adenosylmethionine:tRNA ribosyltransferase-isomerase from Thermoanaerobacter sp. (strain X514).